We begin with the raw amino-acid sequence, 227 residues long: Cytochrome c oxidase subunit 2 (227 aa).

Topologically, residues 1–14 (MAYPFQLGLQDATS) are mitochondrial intermembrane. The helical transmembrane segment at 15–45 (PIMEELTSFHDHTLMIVFLISSLVLYIILLM) threads the bilayer. The Mitochondrial matrix portion of the chain corresponds to 46–59 (LTTKLTHTSTMDAQ). The chain crosses the membrane as a helical span at residues 60–87 (EVETIWTILPAVILILIALPSLRILYMM). The Mitochondrial intermembrane portion of the chain corresponds to 88–227 (DEINNPALTV…HFENWSASMI (140 aa)). Residues H161, C196, E198, C200, H204, and M207 each contribute to the Cu cation site. E198 provides a ligand contact to Mg(2+).

This sequence belongs to the cytochrome c oxidase subunit 2 family. Component of the cytochrome c oxidase (complex IV, CIV), a multisubunit enzyme composed of 14 subunits. The complex is composed of a catalytic core of 3 subunits MT-CO1, MT-CO2 and MT-CO3, encoded in the mitochondrial DNA, and 11 supernumerary subunits COX4I, COX5A, COX5B, COX6A, COX6B, COX6C, COX7A, COX7B, COX7C, COX8 and NDUFA4, which are encoded in the nuclear genome. The complex exists as a monomer or a dimer and forms supercomplexes (SCs) in the inner mitochondrial membrane with NADH-ubiquinone oxidoreductase (complex I, CI) and ubiquinol-cytochrome c oxidoreductase (cytochrome b-c1 complex, complex III, CIII), resulting in different assemblies (supercomplex SCI(1)III(2)IV(1) and megacomplex MCI(2)III(2)IV(2)). Found in a complex with TMEM177, COA6, COX18, COX20, SCO1 and SCO2. Interacts with TMEM177 in a COX20-dependent manner. Interacts with COX20. Interacts with COX16. Cu cation serves as cofactor.

The protein resides in the mitochondrion inner membrane. It catalyses the reaction 4 Fe(II)-[cytochrome c] + O2 + 8 H(+)(in) = 4 Fe(III)-[cytochrome c] + 2 H2O + 4 H(+)(out). Its function is as follows. Component of the cytochrome c oxidase, the last enzyme in the mitochondrial electron transport chain which drives oxidative phosphorylation. The respiratory chain contains 3 multisubunit complexes succinate dehydrogenase (complex II, CII), ubiquinol-cytochrome c oxidoreductase (cytochrome b-c1 complex, complex III, CIII) and cytochrome c oxidase (complex IV, CIV), that cooperate to transfer electrons derived from NADH and succinate to molecular oxygen, creating an electrochemical gradient over the inner membrane that drives transmembrane transport and the ATP synthase. Cytochrome c oxidase is the component of the respiratory chain that catalyzes the reduction of oxygen to water. Electrons originating from reduced cytochrome c in the intermembrane space (IMS) are transferred via the dinuclear copper A center (CU(A)) of subunit 2 and heme A of subunit 1 to the active site in subunit 1, a binuclear center (BNC) formed by heme A3 and copper B (CU(B)). The BNC reduces molecular oxygen to 2 water molecules using 4 electrons from cytochrome c in the IMS and 4 protons from the mitochondrial matrix. The chain is Cytochrome c oxidase subunit 2 (MT-CO2) from Anisomys imitator (Uneven-toothed rat).